Reading from the N-terminus, the 905-residue chain is DNA gyrase subunit A (905 aa).

The region spanning 35–524 is the Topo IIA-type catalytic domain; it reads IPDVRDGLKP…GEFDQDIEDL (490 aa). The O-(5'-phospho-DNA)-tyrosine intermediate role is filled by Y123. A GyrA-box motif is present at residues 551–557; sequence QKRGGKG.

Belongs to the type II topoisomerase GyrA/ParC subunit family. In terms of assembly, heterotetramer, composed of two GyrA and two GyrB chains. In the heterotetramer, GyrA contains the active site tyrosine that forms a transient covalent intermediate with DNA, while GyrB binds cofactors and catalyzes ATP hydrolysis.

It localises to the cytoplasm. It carries out the reaction ATP-dependent breakage, passage and rejoining of double-stranded DNA.. In terms of biological role, a type II topoisomerase that negatively supercoils closed circular double-stranded (ds) DNA in an ATP-dependent manner to modulate DNA topology and maintain chromosomes in an underwound state. Negative supercoiling favors strand separation, and DNA replication, transcription, recombination and repair, all of which involve strand separation. Also able to catalyze the interconversion of other topological isomers of dsDNA rings, including catenanes and knotted rings. Type II topoisomerases break and join 2 DNA strands simultaneously in an ATP-dependent manner. This Rickettsia typhi (strain ATCC VR-144 / Wilmington) protein is DNA gyrase subunit A.